A 318-amino-acid polypeptide reads, in one-letter code: Transaldolase (318 aa).

The active-site Schiff-base intermediate with substrate is lysine 132.

The protein belongs to the transaldolase family. Type 1 subfamily. Homodimer.

Its subcellular location is the cytoplasm. The catalysed reaction is D-sedoheptulose 7-phosphate + D-glyceraldehyde 3-phosphate = D-erythrose 4-phosphate + beta-D-fructose 6-phosphate. Its pathway is carbohydrate degradation; pentose phosphate pathway; D-glyceraldehyde 3-phosphate and beta-D-fructose 6-phosphate from D-ribose 5-phosphate and D-xylulose 5-phosphate (non-oxidative stage): step 2/3. Transaldolase is important for the balance of metabolites in the pentose-phosphate pathway. This Shewanella piezotolerans (strain WP3 / JCM 13877) protein is Transaldolase.